We begin with the raw amino-acid sequence, 164 residues long: V-type proton ATPase subunit c' (164 aa).

At 1–14 (MSTQLASNIYAPLY) the chain is on the vacuolar side. Residues 15–37 (APFFGFAGCAAAMVLSCLGAAIG) traverse the membrane as a helical segment. Residues 38 to 59 (TAKSGIGIAGIGTFKPELIMKS) lie on the Cytoplasmic side of the membrane. The helical transmembrane segment at 60–80 (LIPVVMSGILAIYGLVVAVLI) threads the bilayer. The Vacuolar portion of the chain corresponds to 81-98 (AGNLSPTEDYTLFNGFMH). A helical membrane pass occupies residues 99–120 (LSCGLCVGFACLSSGYAIGMVG). The Cytoplasmic portion of the chain corresponds to 121–132 (DVGVRKYMHQPR). The helical transmembrane segment at 133 to 158 (LFVGIVLILIFSEVLGLYGMIVALIL) threads the bilayer. The Vacuolar portion of the chain corresponds to 159 to 164 (NTRGSE).

The protein belongs to the V-ATPase proteolipid subunit family. In terms of assembly, V-ATPase is a heteromultimeric enzyme composed of a peripheral catalytic V1 complex (components A to H) attached to an integral membrane V0 proton pore complex (components: a, c, c', c'', d, e, f and VOA1). The decameric c-ring forms the proton-conducting pore, and is composed of eight proteolipid subunits c, one subunit c' and one subunit c''.

It localises to the vacuole membrane. In terms of biological role, proton-conducting pore forming subunit of the V0 complex of vacuolar(H+)-ATPase (V-ATPase), a multisubunit enzyme composed of a peripheral complex (V1) that hydrolyzes ATP and a membrane integral complex (V0) that translocates protons. V-ATPase is responsible for acidifying and maintaining the pH of intracellular compartments. The sequence is that of V-type proton ATPase subunit c' (VMA11) from Saccharomyces cerevisiae (strain ATCC 204508 / S288c) (Baker's yeast).